A 40-amino-acid polypeptide reads, in one-letter code: Probable non-specific lipid-transfer protein (40 aa).

The protein belongs to the plant LTP family. Post-translationally, phosphorylated by Ca(2+)-dependent protein kinase.

Plant non-specific lipid-transfer proteins transfer phospholipids as well as galactolipids across membranes. May play a role in wax or cutin deposition in the cell walls of expanding epidermal cells and certain secretory tissues. This chain is Probable non-specific lipid-transfer protein, found in Triticum aestivum (Wheat).